Reading from the N-terminus, the 388-residue chain is tRNA 2-selenouridine synthase (388 aa).

Residues 15 to 138 form the Rhodanese domain; that stretch reads FTADTPLIDV…ARQFLINTID (124 aa). Cys98 (S-selanylcysteine intermediate) is an active-site residue.

It belongs to the SelU family. In terms of assembly, monomer.

The catalysed reaction is 5-methylaminomethyl-2-thiouridine(34) in tRNA + selenophosphate + (2E)-geranyl diphosphate + H2O + H(+) = 5-methylaminomethyl-2-selenouridine(34) in tRNA + (2E)-thiogeraniol + phosphate + diphosphate. The enzyme catalyses 5-methylaminomethyl-2-thiouridine(34) in tRNA + (2E)-geranyl diphosphate = 5-methylaminomethyl-S-(2E)-geranyl-thiouridine(34) in tRNA + diphosphate. It catalyses the reaction 5-methylaminomethyl-S-(2E)-geranyl-thiouridine(34) in tRNA + selenophosphate + H(+) = 5-methylaminomethyl-2-(Se-phospho)selenouridine(34) in tRNA + (2E)-thiogeraniol. It carries out the reaction 5-methylaminomethyl-2-(Se-phospho)selenouridine(34) in tRNA + H2O = 5-methylaminomethyl-2-selenouridine(34) in tRNA + phosphate. Involved in the post-transcriptional modification of the uridine at the wobble position (U34) of tRNA(Lys), tRNA(Glu) and tRNA(Gln). Catalyzes the conversion of 2-thiouridine (S2U-RNA) to 2-selenouridine (Se2U-RNA). Acts in a two-step process involving geranylation of 2-thiouridine (S2U) to S-geranyl-2-thiouridine (geS2U) and subsequent selenation of the latter derivative to 2-selenouridine (Se2U) in the tRNA chain. This is tRNA 2-selenouridine synthase from Nitrosomonas eutropha (strain DSM 101675 / C91 / Nm57).